Consider the following 366-residue polypeptide: NADH-quinone oxidoreductase subunit D (366 aa).

Belongs to the complex I 49 kDa subunit family. As to quaternary structure, NDH-1 is composed of 14 different subunits. Subunits NuoB, C, D, E, F, and G constitute the peripheral sector of the complex.

The protein localises to the cell membrane. The enzyme catalyses a quinone + NADH + 5 H(+)(in) = a quinol + NAD(+) + 4 H(+)(out). Functionally, NDH-1 shuttles electrons from NADH, via FMN and iron-sulfur (Fe-S) centers, to quinones in the respiratory chain. The immediate electron acceptor for the enzyme in this species is believed to be a menaquinone. Couples the redox reaction to proton translocation (for every two electrons transferred, four hydrogen ions are translocated across the cytoplasmic membrane), and thus conserves the redox energy in a proton gradient. The sequence is that of NADH-quinone oxidoreductase subunit D from Bacillus thuringiensis subsp. konkukian (strain 97-27).